Here is a 571-residue protein sequence, read N- to C-terminus: Glutamate--tRNA ligase (571 aa).

A 'HIGH' region motif is present at residues 110–120; sequence PNPNGPGTLGS.

This sequence belongs to the class-I aminoacyl-tRNA synthetase family. Glutamate--tRNA ligase type 2 subfamily.

Its subcellular location is the cytoplasm. It carries out the reaction tRNA(Glu) + L-glutamate + ATP = L-glutamyl-tRNA(Glu) + AMP + diphosphate. In terms of biological role, catalyzes the attachment of glutamate to tRNA(Glu) in a two-step reaction: glutamate is first activated by ATP to form Glu-AMP and then transferred to the acceptor end of tRNA(Glu). The sequence is that of Glutamate--tRNA ligase from Methanosarcina acetivorans (strain ATCC 35395 / DSM 2834 / JCM 12185 / C2A).